Reading from the N-terminus, the 716-residue chain is 1,4-alpha-glucan branching enzyme GlgB (716 aa).

Residue aspartate 399 is the Nucleophile of the active site. The active-site Proton donor is the glutamate 452.

This sequence belongs to the glycosyl hydrolase 13 family. GlgB subfamily. In terms of assembly, monomer.

It catalyses the reaction Transfers a segment of a (1-&gt;4)-alpha-D-glucan chain to a primary hydroxy group in a similar glucan chain.. The protein operates within glycan biosynthesis; glycogen biosynthesis. Functionally, catalyzes the formation of the alpha-1,6-glucosidic linkages in glycogen by scission of a 1,4-alpha-linked oligosaccharide from growing alpha-1,4-glucan chains and the subsequent attachment of the oligosaccharide to the alpha-1,6 position. The polypeptide is 1,4-alpha-glucan branching enzyme GlgB (Rhodopseudomonas palustris (strain HaA2)).